Consider the following 299-residue polypeptide: Dye-decolorizing peroxidase YfeX (299 aa).

Asp-143 functions as the Proton acceptor in the catalytic mechanism. His-215 is a heme binding site.

Belongs to the DyP-type peroxidase family. The cofactor is heme b.

The protein resides in the cytoplasm. Its function is as follows. Has both general peroxidase activity and dye-decolorizing activity. Can catalyze the oxidation of both protoporphyrinogen IX and coproporphyrinogen III to their corresponding porphyrins. Also efficiently decolorizes the dyes alizarin red and Cibacron blue F3GA. This Escherichia coli (strain K12) protein is Dye-decolorizing peroxidase YfeX (yfeX).